The primary structure comprises 80 residues: Large ribosomal subunit protein bL31B (80 aa).

This sequence belongs to the bacterial ribosomal protein bL31 family. Type B subfamily. In terms of assembly, part of the 50S ribosomal subunit.

This chain is Large ribosomal subunit protein bL31B, found in Xanthomonas campestris pv. campestris (strain 8004).